The sequence spans 617 residues: pH-sensitive chloride channel 2 (617 aa).

The first 28 residues, 1 to 28 (MHSPGAAAYVFLQCLVALVAAVIAQSGA), serve as a signal peptide directing secretion. Over 29 to 387 (DQPPTTVVEV…VHLAREMGFY (359 aa)) the chain is Extracellular. A glycan (N-linked (GlcNAc...) asparagine) is linked at Asn-57. Residues 82 to 96 (TVSVDSSSTTTVAST) are compositionally biased toward low complexity. Positions 82-110 (TVSVDSSSTTTVASTQEPTSTTERTMSPE) are disordered. The segment covering 97 to 106 (QEPTSTTERT) has biased composition (polar residues). N-linked (GlcNAc...) asparagine glycosylation occurs at Asn-130. Basic and acidic residues predominate over residues 131–147 (ATDDNRPDAKSSGKDSE). The disordered stretch occupies residues 131–155 (ATDDNRPDAKSSGKDSECPTLEGAD). Asn-184, Asn-234, Asn-351, and Asn-370 each carry an N-linked (GlcNAc...) asparagine glycan. The chain crosses the membrane as a helical span at residues 388–408 (MMDYFIPSIMLVAISWVTFWL). Residues 409-414 (QADQSA) lie on the Cytoplasmic side of the membrane. The helical transmembrane segment at 415–434 (PRITLGTSTMLTFITLASAQ) threads the bilayer. Over 435–447 (GKTLPKVSYIKAS) the chain is Extracellular. A helical transmembrane segment spans residues 448 to 468 (EIWFLGCTGFIFGSLVEFAFV). The Cytoplasmic portion of the chain corresponds to 469–596 (NTIWRRKRNV…VAIWIDKRSR (128 aa)). A helical membrane pass occupies residues 597-617 (FVFPIAFVIFNIFYWTFVYYV).

It belongs to the ligand-gated ion channel (TC 1.A.9) family.

It is found in the cell membrane. It catalyses the reaction chloride(in) = chloride(out). Its function is as follows. Ligand and pH-gated channel that mediates chloride transport in the mid-gut and thereby may function in larval metabolism and fluid homeostasis. Channel opening is triggered by zinc binding or, to a lesser extent, an increase in extracellular pH. This Anopheles gambiae (African malaria mosquito) protein is pH-sensitive chloride channel 2.